Here is a 55-residue protein sequence, read N- to C-terminus: Regulatory protein MokB (55 aa).

Its function is as follows. Overlapping regulatory peptide whose translation enables hokB expression. This Escherichia coli (strain K12) protein is Regulatory protein MokB (mokB).